Consider the following 244-residue polypeptide: 1-(5-phosphoribosyl)-5-[(5-phosphoribosylamino)methylideneamino] imidazole-4-carboxamide isomerase (244 aa).

Asp8 acts as the Proton acceptor in catalysis. Catalysis depends on Asp131, which acts as the Proton donor.

This sequence belongs to the HisA/HisF family.

The protein localises to the cytoplasm. The catalysed reaction is 1-(5-phospho-beta-D-ribosyl)-5-[(5-phospho-beta-D-ribosylamino)methylideneamino]imidazole-4-carboxamide = 5-[(5-phospho-1-deoxy-D-ribulos-1-ylimino)methylamino]-1-(5-phospho-beta-D-ribosyl)imidazole-4-carboxamide. Its pathway is amino-acid biosynthesis; L-histidine biosynthesis; L-histidine from 5-phospho-alpha-D-ribose 1-diphosphate: step 4/9. This chain is 1-(5-phosphoribosyl)-5-[(5-phosphoribosylamino)methylideneamino] imidazole-4-carboxamide isomerase, found in Thermomicrobium roseum (strain ATCC 27502 / DSM 5159 / P-2).